A 337-amino-acid polypeptide reads, in one-letter code: Phosphate acyltransferase (337 aa).

It belongs to the PlsX family. In terms of assembly, homodimer. Probably interacts with PlsY.

It localises to the cytoplasm. It carries out the reaction a fatty acyl-[ACP] + phosphate = an acyl phosphate + holo-[ACP]. It functions in the pathway lipid metabolism; phospholipid metabolism. Functionally, catalyzes the reversible formation of acyl-phosphate (acyl-PO(4)) from acyl-[acyl-carrier-protein] (acyl-ACP). This enzyme utilizes acyl-ACP as fatty acyl donor, but not acyl-CoA. In Latilactobacillus sakei subsp. sakei (strain 23K) (Lactobacillus sakei subsp. sakei), this protein is Phosphate acyltransferase.